The following is a 438-amino-acid chain: Plasmalemma vesicle-associated protein (438 aa).

Over 1-26 (MGLSMDRSPYARTGDQQRGCWYYLRY) the chain is Cytoplasmic. The helical; Signal-anchor for type II membrane protein transmembrane segment at 27 to 47 (FFLFVSLIQFLIILGLVLFMI) threads the bilayer. Over 48–438 (YGNVHATTES…VVNPAAQPSG (391 aa)) the chain is Extracellular. N-linked (GlcNAc...) asparagine glycans are attached at residues N82, N88, N112, and N150. Coiled coils occupy residues 140–160 (KQCQ…LFKL), 189–224 (KRQT…QSLC), and 281–383 (EELA…ISAL). The disordered stretch occupies residues 391–413 (SLPAVPPRVSGPPPNPPPIDPAS). Residues 394 to 410 (AVPPRVSGPPPNPPPID) are compositionally biased toward pro residues.

In terms of assembly, homodimer. Expressed in lung, kidney, spleen, heart, muscle, eye, pancreas, thyroid, thymus, submaxillary gland, prostate, epididymis, uterus and liver.

Its subcellular location is the cell membrane. The protein localises to the membrane. It localises to the caveola. The protein resides in the cytoplasm. It is found in the perinuclear region. Endothelial cell-specific membrane protein involved in the formation of the diaphragms that bridge endothelial fenestrae. It is also required for the formation of stomata of caveolae and transendothelial channels. Functions in microvascular permeability, endothelial fenestrae contributing to the passage of water and solutes and regulating transcellular versus paracellular flow in different organs. Plays a specific role in embryonic development. The polypeptide is Plasmalemma vesicle-associated protein (Plvap) (Mus musculus (Mouse)).